The chain runs to 258 residues: 2-succinyl-6-hydroxy-2,4-cyclohexadiene-1-carboxylate synthase (258 aa).

Belongs to the AB hydrolase superfamily. MenH family. In terms of assembly, monomer.

It catalyses the reaction 5-enolpyruvoyl-6-hydroxy-2-succinyl-cyclohex-3-ene-1-carboxylate = (1R,6R)-6-hydroxy-2-succinyl-cyclohexa-2,4-diene-1-carboxylate + pyruvate. Its pathway is quinol/quinone metabolism; 1,4-dihydroxy-2-naphthoate biosynthesis; 1,4-dihydroxy-2-naphthoate from chorismate: step 3/7. It functions in the pathway quinol/quinone metabolism; menaquinone biosynthesis. Functionally, catalyzes a proton abstraction reaction that results in 2,5-elimination of pyruvate from 2-succinyl-5-enolpyruvyl-6-hydroxy-3-cyclohexene-1-carboxylate (SEPHCHC) and the formation of 2-succinyl-6-hydroxy-2,4-cyclohexadiene-1-carboxylate (SHCHC). The protein is 2-succinyl-6-hydroxy-2,4-cyclohexadiene-1-carboxylate synthase of Enterobacter sp. (strain 638).